We begin with the raw amino-acid sequence, 417 residues long: MTPYIVILSTGSELTAGRSVDTNSGWIANQLFELGWKVKKIITLPDDPNLIFKELEALQSLAKEIPVLAIMTGGLGPTEDDYTLETVLKLTGKTSYAVEKAKIRLTKIYEARGKDYKDILPTVFRQTNVPEGCKTLDNSVGIAVGFIESLGENSYLVCMPGVPSEMTEMFKRRLVPELKKMYPRENLIQKTKWLWNIGESLFQNEFIEPNREVYFKETEWGVTANRGYIKCIFQSTNDVMLDTILKSLEKQYPDLISDDVFQYVHEQLLYEKWTISVVESCTGGLLGKKLTERAGSSAYFMGGFLTYSNEMKSNLLGIPKETIETFGAVSDEVAFAMVDGLCLKTGTDFGVSITGIAGPEGGSEEKPVGTVCIGLKEPNGKIKVHRYLFPGNRESIRENASNTALFLIYQSLKGKVV.

This sequence belongs to the CinA family.

This is CinA-like protein from Leptospira biflexa serovar Patoc (strain Patoc 1 / Ames).